We begin with the raw amino-acid sequence, 383 residues long: Chitinase-3-like protein 1 (383 aa).

An N-terminal signal peptide occupies residues 1-21 (MGLRVAQTGFVALVLLQSCAA). One can recognise a GH18 domain in the interval 22–383 (YKLVCYYTSW…SAIKDVLAAA (362 aa)). A disulfide bond links cysteine 26 and cysteine 51. N-linked (GlcNAc...) asparagine glycosylation occurs at asparagine 60. Chitin is bound by residues 70-71 (EW), 97-100 (GGWN), tyrosine 141, 204-207 (LTYD), and arginine 263. Cysteine 300 and cysteine 364 form a disulfide bridge. An important for AKT1 activation and IL8 production region spans residues 324-338 (QWVGYDDQESVKNKA). Tryptophan 352 contacts chitin.

The protein belongs to the glycosyl hydrolase 18 family. As to quaternary structure, monomer. As to expression, detected in smooth muscle cells in atherosclerotic plaques. Detected in regions of vascular occlusion in the aorta.

It is found in the secreted. Its subcellular location is the extracellular space. The protein localises to the cytoplasm. It localises to the perinuclear region. The protein resides in the endoplasmic reticulum. In terms of biological role, carbohydrate-binding lectin with a preference for chitin. Has no chitinase activity. May play a role in tissue remodeling and in the capacity of cells to respond to and cope with changes in their environment. Plays a role in T-helper cell type 2 (Th2) inflammatory response and IL-13-induced inflammation, regulating allergen sensitization, inflammatory cell apoptosis, dendritic cell accumulation and M2 macrophage differentiation. Facilitates invasion of pathogenic enteric bacteria into colonic mucosa and lymphoid organs. Mediates activation of AKT1 signaling pathway and subsequent IL8 production in colonic epithelial cells. Regulates antibacterial responses in lung by contributing to macrophage bacterial killing, controlling bacterial dissemination and augmenting host tolerance. Also regulates hyperoxia-induced injury, inflammation and epithelial apoptosis in lung. Stimulates migration and adhesion of cultured vascular smooth muscle cells. This Sus scrofa (Pig) protein is Chitinase-3-like protein 1 (CHI3L1).